A 195-amino-acid chain; its full sequence is MKLSDTDIRRYMAEGRIAIDPVPGEDAIGAMSVDLQLGDSFRVFVPGKVSHVDLAPPGGIKGRDIEALMGHVEVGENEAFYLHPGEFALGITIQRVRLPADVAGRLDGRSSLARLGLMVHATAHTIDPGWDGRITLEFFNCGPLPLAMRPGMRICAISFEALMSPTSKPYAASPTAKYKDQLAPLPSRLASDQSA.

DCTP-binding positions include 109–114 (RSSLAR), aspartate 127, 135–137 (TLE), tyrosine 170, lysine 177, and glutamine 181. Residue glutamate 137 is the Proton donor/acceptor of the active site.

It belongs to the dCTP deaminase family. In terms of assembly, homotrimer.

The catalysed reaction is dCTP + H2O + H(+) = dUTP + NH4(+). It functions in the pathway pyrimidine metabolism; dUMP biosynthesis; dUMP from dCTP (dUTP route): step 1/2. Functionally, catalyzes the deamination of dCTP to dUTP. This is dCTP deaminase from Rhodospirillum rubrum (strain ATCC 11170 / ATH 1.1.1 / DSM 467 / LMG 4362 / NCIMB 8255 / S1).